We begin with the raw amino-acid sequence, 189 residues long: Inosine triphosphate pyrophosphatase (189 aa).

14–19 (TGNQNK) serves as a coordination point for ITP. Position 42 (E42) interacts with Mg(2+). Residues K54, 70–71 (DT), K87, 146–149 (FGWD), K167, and 172–173 (HR) each bind ITP.

The protein belongs to the HAM1 NTPase family. Homodimer. Mg(2+) serves as cofactor. Mn(2+) is required as a cofactor.

The protein localises to the cytoplasm. Its subcellular location is the nucleus. The catalysed reaction is ITP + H2O = IMP + diphosphate + H(+). It carries out the reaction dITP + H2O = dIMP + diphosphate + H(+). The enzyme catalyses XTP + H2O = XMP + diphosphate + H(+). Functionally, pyrophosphatase that hydrolyzes non-canonical purine nucleotides such as inosine triphosphate (ITP), deoxyinosine triphosphate (dITP) or xanthosine 5'-triphosphate (XTP) to their respective monophosphate derivatives. The enzyme does not distinguish between the deoxy- and ribose forms. Probably excludes non-canonical purines from RNA and DNA precursor pools, thus preventing their incorporation into RNA and DNA and avoiding chromosomal lesions. This Pyricularia oryzae (strain 70-15 / ATCC MYA-4617 / FGSC 8958) (Rice blast fungus) protein is Inosine triphosphate pyrophosphatase.